The sequence spans 118 residues: MPFVELDTNLQQQEVPQDLAEKLCSATATILGKPRERVNVTVRTGVSMVVGGSSAPCTQLIISSIGVVGTAEQNKEHSAKFFNFLTEQLGLAQDRILLRFVPLEPWQIGKNGTVMTFL.

Position 2 is an N-acetylproline (Pro2).

It belongs to the MIF family. In terms of assembly, homotrimer.

Its subcellular location is the cytoplasm. It carries out the reaction D-dopachrome + H(+) = 5,6-dihydroxyindole + CO2. Tautomerization of D-dopachrome with decarboxylation to give 5,6-dihydroxyindole (DHI). The polypeptide is D-dopachrome decarboxylase-B (ddt-b) (Xenopus laevis (African clawed frog)).